A 443-amino-acid chain; its full sequence is F-box only protein 39 (443 aa).

The 46-residue stretch at 16-61 (WATLPDVCLRRVFWWLGDRDRSRAALVCRKWNQMMYSADLWRYRTI) folds into the F-box domain.

Directly interacts with SKP1 and CUL1.

Functionally, substrate-recognition component of the SCF (SKP1-CUL1-F-box protein)-type E3 ubiquitin ligase complex. This Bos taurus (Bovine) protein is F-box only protein 39 (FBXO39).